We begin with the raw amino-acid sequence, 492 residues long: 2-succinylbenzoate--CoA ligase (492 aa).

This sequence belongs to the ATP-dependent AMP-binding enzyme family. MenE subfamily.

It catalyses the reaction 2-succinylbenzoate + ATP + CoA = 2-succinylbenzoyl-CoA + AMP + diphosphate. It functions in the pathway quinol/quinone metabolism; 1,4-dihydroxy-2-naphthoate biosynthesis; 1,4-dihydroxy-2-naphthoate from chorismate: step 5/7. It participates in quinol/quinone metabolism; menaquinone biosynthesis. Functionally, converts 2-succinylbenzoate (OSB) to 2-succinylbenzoyl-CoA (OSB-CoA). This is 2-succinylbenzoate--CoA ligase from Staphylococcus aureus (strain MRSA252).